Reading from the N-terminus, the 165-residue chain is Large ribosomal subunit protein uL10 (165 aa).

It belongs to the universal ribosomal protein uL10 family. Part of the ribosomal stalk of the 50S ribosomal subunit. The N-terminus interacts with L11 and the large rRNA to form the base of the stalk. The C-terminus forms an elongated spine to which L12 dimers bind in a sequential fashion forming a multimeric L10(L12)X complex.

In terms of biological role, forms part of the ribosomal stalk, playing a central role in the interaction of the ribosome with GTP-bound translation factors. This Cronobacter sakazakii (strain ATCC BAA-894) (Enterobacter sakazakii) protein is Large ribosomal subunit protein uL10.